A 201-amino-acid polypeptide reads, in one-letter code: Small ribosomal subunit protein uS4c (201 aa).

The interval 20–44 is disordered; the sequence is GLTSKRPTVGSELRNQSRSTKKSQY. The S4 RNA-binding domain occupies 89–150; sequence MRLDNILFRL…NKKSKTLIQN (62 aa).

It belongs to the universal ribosomal protein uS4 family. As to quaternary structure, part of the 30S ribosomal subunit. Contacts protein S5. The interaction surface between S4 and S5 is involved in control of translational fidelity.

Its subcellular location is the plastid. It localises to the chloroplast. One of the primary rRNA binding proteins, it binds directly to 16S rRNA where it nucleates assembly of the body of the 30S subunit. In terms of biological role, with S5 and S12 plays an important role in translational accuracy. The protein is Small ribosomal subunit protein uS4c (rps4) of Lotus japonicus (Lotus corniculatus var. japonicus).